Here is a 184-residue protein sequence, read N- to C-terminus: ADP-ribosylation factor 6 (184 aa).

A lipid anchor (N-myristoyl glycine) is attached at Gly-2. Residues 28–35 (GLDAAGKT), 71–75 (DVGGQ), and 130–133 (NKQD) each bind GTP.

Belongs to the small GTPase superfamily. Arf family.

The protein localises to the cell membrane. Functionally, GTP-binding protein that functions as a molecular switch for the activation of 'new end take off' (NETO), a process in which the directions of cell growth change from a monopolar manner to a bipolar manner in fission yeast. Involved in supplying membrane to the growing new end. This is ADP-ribosylation factor 6 (arf6) from Schizosaccharomyces pombe (strain 972 / ATCC 24843) (Fission yeast).